The sequence spans 231 residues: Enolase-phosphatase E1 (231 aa).

The tract at residues 206–231 (LLERPGNAPQPKHSHPKISSFENFNP) is disordered.

It belongs to the HAD-like hydrolase superfamily. MasA/MtnC family. As to quaternary structure, monomer. It depends on Mg(2+) as a cofactor.

The catalysed reaction is 5-methylsulfanyl-2,3-dioxopentyl phosphate + H2O = 1,2-dihydroxy-5-(methylsulfanyl)pent-1-en-3-one + phosphate. It participates in amino-acid biosynthesis; L-methionine biosynthesis via salvage pathway; L-methionine from S-methyl-5-thio-alpha-D-ribose 1-phosphate: step 3/6. The protein operates within amino-acid biosynthesis; L-methionine biosynthesis via salvage pathway; L-methionine from S-methyl-5-thio-alpha-D-ribose 1-phosphate: step 4/6. Its function is as follows. Bifunctional enzyme that catalyzes the enolization of 2,3-diketo-5-methylthiopentyl-1-phosphate (DK-MTP-1-P) into the intermediate 2-hydroxy-3-keto-5-methylthiopentenyl-1-phosphate (HK-MTPenyl-1-P), which is then dephosphorylated to form the acireductone 1,2-dihydroxy-3-keto-5-methylthiopentene (DHK-MTPene). The chain is Enolase-phosphatase E1 from Leptospira borgpetersenii serovar Hardjo-bovis (strain JB197).